A 206-amino-acid polypeptide reads, in one-letter code: Alpha-amylase/trypsin inhibitor (206 aa).

8 disulfides stabilise this stretch: C9/C205, C51/C61, C66/C72, C118/C194, C124/C177, C132/C142, C146/C155, and C156/C164.

The protein belongs to the thaumatin family.

Its function is as follows. Inhibits both trypsin and alpha-amylase. Inhibits the growth of some plant fungal pathogens. The chain is Alpha-amylase/trypsin inhibitor from Zea mays (Maize).